A 269-amino-acid polypeptide reads, in one-letter code: Novel plant SNARE 13 (269 aa).

The Cytoplasmic portion of the chain corresponds to 1 to 217 (MASNLPMSPQ…IGRQVATDKC (217 aa)). The stretch at 33-94 (DKIKDSTRQS…KQSMIKELNS (62 aa)) forms a coiled coil. S74 is modified (phosphoserine). The t-SNARE coiled-coil homology domain maps to 146–208 (MKRMDETDQA…KKASQLVKEI (63 aa)). The chain crosses the membrane as a helical; Anchor for type IV membrane protein span at residues 218–238 (IMGFLFLIVCGVVAIIIVKIV). Residues 239 to 269 (NPNNKDIRDIPGLAPPAQSRKLLYLRNQDYM) lie on the Vesicular side of the membrane.

Belongs to the novel plant SNARE family.

The protein resides in the membrane. In terms of biological role, vesicle trafficking protein that functions in the secretory pathway. This is Novel plant SNARE 13 (NPSN13) from Arabidopsis thaliana (Mouse-ear cress).